Here is a 488-residue protein sequence, read N- to C-terminus: MDPTAPLLTHGGEVEEDYAPARSWTDVKRVLSTESAKLWMIAAPVGFNIICQYGVSSVTNIFVGHIGEVELSAVSISLSVIGTFSFGFLLGMGSALETLCGQAYGAGQVNMLGVYMQRSWIILFVSCFFLLPIYIFATPVLRLLGQAEEIAVPAGQFTLLTIPQLFSLAFNFPTSKFLQAQSKVVAIAWIGFVALSLHVIMLWLFIIEFGWGTNGAALAFNITNWGTAIAQIVYVIGWCNEGWTGLSWLAFKEIWAFVRLSIASAVMLCLEIWYMMSIIVLTGRLDNAVIAVDSLSICMNINGLEAMLFIGINAAISVRVSNELGLGRPRAAKYSVYVTVFQSLLIGLVFMVAIIIARDHFAIIFTSSKVLQRAVSKLAYLLGITMVLNSVQPVVSGVAVGGGWQGLVAYINLGCYYIFGLPFGYLLGYIANFGVMGLWSGMIAGTALQTLLLLIVLYKTNWNKEVEETMERMKKWGGSETTSKDILA.

Helical transmembrane passes span 38–58 (LWMIAAPVGFNIICQYGVSSV), 73–93 (AVSISLSVIGTFSFGFLLGMG), 121–141 (IILFVSCFFLLPIYIFATPVL), 150–170 (IAVPAGQFTLLTIPQLFSLAF), 187–207 (IAWIGFVALSLHVIMLWLFII), 218–238 (LAFNITNWGTAIAQIVYVIGW), 262–282 (IASAVMLCLEIWYMMSIIVLT), 296–316 (SICMNINGLEAMLFIGINAAI), 336–356 (VYVTVFQSLLIGLVFMVAIII), 379–401 (AYLLGITMVLNSVQPVVSGVAVG), 408–428 (VAYINLGCYYIFGLPFGYLLG), and 439–459 (WSGMIAGTALQTLLLLIVLYK).

The protein belongs to the multi antimicrobial extrusion (MATE) (TC 2.A.66.1) family. As to expression, highly expressed in inflorescence tissues, especially in floral epidermal guard cells including those of the anthers, stigma, siliques and nectaries. Also detected in the meristematic zone of the root apex and in the elongation zone through to the fully expanded cells of the differentiation zone.

It is found in the vacuole membrane. Its function is as follows. Multidrug and toxin efflux transporter involved in flavonoid metabolism. Required for proper reproductive development. The sequence is that of Protein DETOXIFICATION 35 from Arabidopsis thaliana (Mouse-ear cress).